Reading from the N-terminus, the 1007-residue chain is Probable inorganic carbon transporter subunit DabA (1007 aa).

Zn(2+) is bound by residues Cys-442, Asp-444, His-696, and Cys-711.

The protein belongs to the inorganic carbon transporter (TC 9.A.2) DabA family. In terms of assembly, forms a complex with DabB. It depends on Zn(2+) as a cofactor.

It is found in the cell inner membrane. Part of an energy-coupled inorganic carbon pump. The polypeptide is Probable inorganic carbon transporter subunit DabA (Aquifex aeolicus (strain VF5)).